Consider the following 180-residue polypeptide: Large ribosomal subunit protein uL10 (180 aa).

It belongs to the universal ribosomal protein uL10 family. In terms of assembly, part of the ribosomal stalk of the 50S ribosomal subunit. The N-terminus interacts with L11 and the large rRNA to form the base of the stalk. The C-terminus forms an elongated spine to which L12 dimers bind in a sequential fashion forming a multimeric L10(L12)X complex.

In terms of biological role, forms part of the ribosomal stalk, playing a central role in the interaction of the ribosome with GTP-bound translation factors. The sequence is that of Large ribosomal subunit protein uL10 (rplJ) from Treponema pallidum (strain Nichols).